The chain runs to 266 residues: Putative carbamate hydrolase RutD (266 aa).

Belongs to the AB hydrolase superfamily. Hydrolase RutD family.

The enzyme catalyses carbamate + 2 H(+) = NH4(+) + CO2. Its function is as follows. Involved in pyrimidine catabolism. May facilitate the hydrolysis of carbamate, a reaction that can also occur spontaneously. This is Putative carbamate hydrolase RutD from Escherichia coli O7:K1 (strain IAI39 / ExPEC).